The primary structure comprises 96 residues: Maintenance of carboxysome distribution protein B (96 aa).

A compositionally biased stretch (basic and acidic residues) spans M1–D18. Positions M1–D96 are disordered. A compositionally biased stretch (low complexity) spans A59–P74.

Monomer, associates with McdA:DNA. Interacts with shell components of the carboxysome.

It is found in the carboxysome. McdA and McdB together mediate carboxysome positioning on the nucleoid and to prevent their aggregation in the cell. Undergoes liquid-liquid phase separation at pH 7.0 in the presence of crowders polyethylene glycol or Ficoll. McdA is an ATPase that forms dynamic gradients on the nucleoid in response to adapter protein McdB, which associates with carboxysomes. The interplay between McdA gradients on the nucleoid and McdB-bound carboxysomes result in the equal spacing of Cbs along the cell length. Stimulates the ATPase activity of McdA, causing McdA to be released from DNA. Its function is as follows. Incorrect positioning (aggregation) of carboxysomes results in reduced CO(2) fixation by encapsulated form 1 ribulose-1,5-bisphosphate carboxylase (RuBisCO, cbbL/cbbS), which leads to slower growth. The sequence is that of Maintenance of carboxysome distribution protein B from Halothiobacillus neapolitanus (strain ATCC 23641 / c2) (Thiobacillus neapolitanus).